A 419-amino-acid chain; its full sequence is 26S proteasome regulatory subunit 8 homolog A (419 aa).

Ala2 carries the N-acetylalanine modification. Gly202–Thr209 lines the ATP pocket. Residue Lys406 forms a Glycyl lysine isopeptide (Lys-Gly) (interchain with G-Cter in ubiquitin) linkage.

Belongs to the AAA ATPase family. In terms of assembly, component of the 19S regulatory particle (RP/PA700) base subcomplex of the 26S proteasome. The 26S proteasome is composed of a core protease (CP), known as the 20S proteasome, capped at one or both ends by the 19S regulatory particle (RP/PA700). The RP/PA700 complex is composed of at least 17 different subunits in two subcomplexes, the base and the lid, which form the portions proximal and distal to the 20S proteolytic core, respectively.

Its subcellular location is the cytoplasm. It localises to the nucleus. Functionally, the 26S proteasome is involved in the ATP-dependent degradation of ubiquitinated proteins. The regulatory (or ATPase) complex confers ATP dependency and substrate specificity to the 26S complex. The polypeptide is 26S proteasome regulatory subunit 8 homolog A (RPT6A) (Arabidopsis thaliana (Mouse-ear cress)).